The following is a 210-amino-acid chain: Large ribosomal subunit protein uL3 (210 aa).

Positions 133 to 156 (ASHGNSLSHRVPGSIGQNQTPGKV) are disordered. Position 151 is an N5-methylglutamine (glutamine 151).

Belongs to the universal ribosomal protein uL3 family. In terms of assembly, part of the 50S ribosomal subunit. Forms a cluster with proteins L14 and L19. Post-translationally, methylated by PrmB.

In terms of biological role, one of the primary rRNA binding proteins, it binds directly near the 3'-end of the 23S rRNA, where it nucleates assembly of the 50S subunit. The protein is Large ribosomal subunit protein uL3 of Hamiltonella defensa subsp. Acyrthosiphon pisum (strain 5AT).